A 282-amino-acid chain; its full sequence is uncharacterized protein (282 aa).

The helical transmembrane segment at 22–42 (YLFTLGSFVTMFFVLCISPVF) threads the bilayer.

It is found in the cell membrane. This is an uncharacterized protein from Bacillus anthracis.